The primary structure comprises 468 residues: Cysteine--tRNA ligase (468 aa).

Cys-27 contributes to the Zn(2+) binding site. The short motif at 29–39 is the 'HIGH' region element; sequence PTVYNYFHIGN. Zn(2+) contacts are provided by Cys-207, His-232, and Glu-236. Positions 264 to 268 match the 'KMSKS' region motif; that stretch reads KMAKS. Lys-267 serves as a coordination point for ATP.

It belongs to the class-I aminoacyl-tRNA synthetase family. In terms of assembly, monomer. Zn(2+) serves as cofactor.

It is found in the cytoplasm. It catalyses the reaction tRNA(Cys) + L-cysteine + ATP = L-cysteinyl-tRNA(Cys) + AMP + diphosphate. The chain is Cysteine--tRNA ligase from Acetivibrio thermocellus (strain ATCC 27405 / DSM 1237 / JCM 9322 / NBRC 103400 / NCIMB 10682 / NRRL B-4536 / VPI 7372) (Clostridium thermocellum).